A 130-amino-acid polypeptide reads, in one-letter code: UPF0146 protein AF_0739.1 (130 aa).

The protein belongs to the UPF0146 family.

The sequence is that of UPF0146 protein AF_0739.1 from Archaeoglobus fulgidus (strain ATCC 49558 / DSM 4304 / JCM 9628 / NBRC 100126 / VC-16).